Here is an 88-residue protein sequence, read N- to C-terminus: RNA-binding protein Hfq (88 aa).

The 60-residue stretch at 9–68 folds into the Sm domain; it reads DPFLNALRCERIPVSIYLVNGIKLQGQIESFDQFVILLKNTVNQMVYKHAISTVVPARAV. Positions 66–88 are disordered; that stretch reads RAVSHHTASDRPQGERPQETTEE. Over residues 72 to 88 the composition is skewed to basic and acidic residues; the sequence is TASDRPQGERPQETTEE.

Belongs to the Hfq family. In terms of assembly, homohexamer.

RNA chaperone that binds small regulatory RNA (sRNAs) and mRNAs to facilitate mRNA translational regulation in response to envelope stress, environmental stress and changes in metabolite concentrations. Also binds with high specificity to tRNAs. This chain is RNA-binding protein Hfq, found in Aliivibrio salmonicida (strain LFI1238) (Vibrio salmonicida (strain LFI1238)).